The chain runs to 326 residues: Melanocortin receptor 4 (326 aa).

Residues 1-14 are compositionally biased toward basic residues; sequence MNTSHHHGLHHSFR. Positions 1 to 31 are disordered; the sequence is MNTSHHHGLHHSFRNHSQGALPVGKPSHGDR. Residues 1-46 are Extracellular-facing; it reads MNTSHHHGLHHSFRNHSQGALPVGKPSHGDRGSASGCYEQLLISTE. Residues N2 and N15 are each glycosylated (N-linked (GlcNAc...) asparagine). The helical transmembrane segment at 47 to 67 threads the bilayer; sequence IFLTLGLVSLLENILVIAAIV. Over 68–71 the chain is Cytoplasmic; that stretch reads KNKN. The chain crosses the membrane as a helical span at residues 72-92; sequence LHSPMYFFICSLAVADLLVSV. Over 93 to 121 the chain is Extracellular; it reads SNASETVVMALITGGNLTNRESIIKNMDN. N-linked (GlcNAc...) asparagine glycans are attached at residues N94 and N108. The helical transmembrane segment at 122 to 142 threads the bilayer; that stretch reads VFDSMICSSLLASIWSLLAIA. The Cytoplasmic portion of the chain corresponds to 143-163; it reads VDRYITIFYALRYHNIMTQRR. The chain crosses the membrane as a helical span at residues 164-184; it reads AGTIITCIWTFCTVSGVLFIV. Over 185–190 the chain is Extracellular; sequence YSESTT. Residues 191 to 211 traverse the membrane as a helical segment; it reads VLICLISMFFTMLALMASLYV. Residues 212–246 lie on the Cytoplasmic side of the membrane; sequence HMFLLARLHMKRIAALPGNGPIWQAANMKGAITIT. A helical transmembrane segment spans residues 247–267; that stretch reads ILLGVFVVCWAPFFLHLILMI. Residues 268-281 lie on the Extracellular side of the membrane; sequence SCPRNPYCVCFMSH. Residues 282 to 302 form a helical membrane-spanning segment; that stretch reads FNMYLILIMCNSVIDPLIYAF. The Cytoplasmic segment spans residues 303–326; it reads RSQEMRKTFKEICCCWYGLASLCV. The S-palmitoyl cysteine moiety is linked to residue C316.

It belongs to the G-protein coupled receptor 1 family. As to quaternary structure, homodimer; disulfide-linked, also forms higher order oligomers. Interacts with mrap2a; decreasing ligand-sensitivity. Interacts with mrap2b; increasing ligand-sensitivity and generation of cAMP.

The protein localises to the cell membrane. In terms of biological role, receptor specific to the heptapeptide core common to adrenocorticotropic hormone and alpha-, beta-, and gamma-MSH. Plays a central role in energy homeostasis and somatic growth. This receptor is mediated by G proteins that stimulate adenylate cyclase (cAMP). This Danio rerio (Zebrafish) protein is Melanocortin receptor 4 (mc4r).